Reading from the N-terminus, the 237-residue chain is Intracellular ribonuclease LX (237 aa).

Positions 1–24 (MMKSQKKLLIKIIVVQCLLVLCVT) are excised as a propeptide. Position 36 (Q36) interacts with RNA. Cysteines 42 and 48 form a disulfide. Residues H63, F113, 116 to 117 (HE), and 120 to 121 (KH) contribute to the RNA site. Catalysis depends on H63, which acts as the Proton donor. 3 disulfides stabilise this stretch: C78-C124, C183-C219, and C199-C210. E117 is an active-site residue. H121 (proton acceptor) is an active-site residue.

The protein belongs to the RNase T2 family.

Its subcellular location is the cytoplasm. It carries out the reaction a ribonucleotidyl-ribonucleotide-RNA + H2O = a 3'-end 3'-phospho-ribonucleotide-RNA + a 5'-end dephospho-ribonucleoside-RNA + H(+). The polypeptide is Intracellular ribonuclease LX (RNALX) (Solanum lycopersicum (Tomato)).